A 379-amino-acid polypeptide reads, in one-letter code: Putative thylakoid lumen peptidyl-prolyl cis-trans isomerase sll0408 (379 aa).

The signal sequence occupies residues 1–33 (MQIIKTPLGIITRRGLQLSLLSLLLTMLSLTWA). One can recognise a PPIase cyclophilin-type domain in the interval 190–378 (GRATVEMTTN…SGADNLVNGN (189 aa)).

The protein resides in the cellular thylakoid lumen. It carries out the reaction [protein]-peptidylproline (omega=180) = [protein]-peptidylproline (omega=0). In terms of biological role, PPIases accelerate the folding of proteins. It catalyzes the cis-trans isomerization of proline imidic peptide bonds in oligopeptides. Required for the assembly and stabilization of PSII. This is Putative thylakoid lumen peptidyl-prolyl cis-trans isomerase sll0408 from Synechocystis sp. (strain ATCC 27184 / PCC 6803 / Kazusa).